Consider the following 182-residue polypeptide: U1 small nuclear ribonucleoprotein C (182 aa).

Residues 4–36 (YLCDYCQVWLTHDSQSVRKAHNAGRAHIQNVQD) form a Matrin-type zinc finger. Residues 129-182 (PQTTASSNTQLTQQQQSLPQTNEHQRARTHSNANNHFTKTHHQGQRSHQRFVRA) form a disordered region. The span at 130–150 (QTTASSNTQLTQQQQSLPQTN) shows a compositional bias: low complexity. The segment covering 166–182 (TKTHHQGQRSHQRFVRA) has biased composition (basic residues).

This sequence belongs to the U1 small nuclear ribonucleoprotein C family. In terms of assembly, U1 snRNP is composed of the 7 core Sm proteins smb1, smd1, smd2, smd3, sme1, smf1 and smg1 (Sm proteins B, D1, D2, D3, E, F and G, respectively) that assemble in a heptameric protein ring on the Sm site of the small nuclear RNA to form the core snRNP, and at least 9 U1 snRNP-specific proteins usp101/U1-70K, usp102/U1-A, usp103/U1-C, usp106/LUC7, usp105/PRP39, usp104/PRP40, usp107/U1-H, usp108/U1-J and usp109/U1-L. usp103/U1-C interacts with U1 snRNA and the 5' splice-site region of the pre-mRNA.

Its subcellular location is the nucleus. Component of the spliceosomal U1 snRNP, which is essential for recognition of the pre-mRNA 5' splice-site and the subsequent assembly of the spliceosome. usp103/U1-C is directly involved in initial 5' splice-site recognition for both constitutive and regulated alternative splicing. The interaction with the 5' splice-site seems to precede base-pairing between the pre-mRNA and the U1 snRNA. Stimulates commitment or early (E) complex formation by stabilizing the base pairing of the 5' end of the U1 snRNA and the 5' splice-site region. This Schizosaccharomyces pombe (strain 972 / ATCC 24843) (Fission yeast) protein is U1 small nuclear ribonucleoprotein C (usp103).